The primary structure comprises 249 residues: 2,3-bisphosphoglycerate-dependent phosphoglycerate mutase (249 aa).

Substrate is bound by residues 9-16, 22-23, R61, 88-91, K99, 115-116, and 184-185; these read RHGQSQWN, TG, ERHY, RR, and GN. Catalysis depends on H10, which acts as the Tele-phosphohistidine intermediate. The active-site Proton donor/acceptor is E88.

Belongs to the phosphoglycerate mutase family. BPG-dependent PGAM subfamily. In terms of assembly, homodimer.

The enzyme catalyses (2R)-2-phosphoglycerate = (2R)-3-phosphoglycerate. Its pathway is carbohydrate degradation; glycolysis; pyruvate from D-glyceraldehyde 3-phosphate: step 3/5. Catalyzes the interconversion of 2-phosphoglycerate and 3-phosphoglycerate. This Stenotrophomonas maltophilia (strain K279a) protein is 2,3-bisphosphoglycerate-dependent phosphoglycerate mutase.